Consider the following 162-residue polypeptide: 3-isopropylmalate dehydratase small subunit (162 aa).

Belongs to the LeuD family. LeuD type 2 subfamily. In terms of assembly, heterodimer of LeuC and LeuD.

It carries out the reaction (2R,3S)-3-isopropylmalate = (2S)-2-isopropylmalate. Its pathway is amino-acid biosynthesis; L-leucine biosynthesis; L-leucine from 3-methyl-2-oxobutanoate: step 2/4. Functionally, catalyzes the isomerization between 2-isopropylmalate and 3-isopropylmalate, via the formation of 2-isopropylmaleate. The polypeptide is 3-isopropylmalate dehydratase small subunit (Pyrobaculum neutrophilum (strain DSM 2338 / JCM 9278 / NBRC 100436 / V24Sta) (Thermoproteus neutrophilus)).